Reading from the N-terminus, the 696-residue chain is MARTHKLEDVRNIGIAAHIDAGKTTTTERILFYTGVEHKIGEVHDGAATMDWMEQEQERGITITSAATTCEWLGKQINIIDTPGHVDFTIEVERSMRVLDGAVSVFCAVGGVQPQSETVWRQRNRYGVPSLVFVNKMDRTGADFLEVERQIRDRLKGNPLVIQLPIGAEENFEGVVDLVKMKEIVWDADAEMGSAYHEQDIRPELQEQAEAFREKLIEGISEVDGNEELMEKYMEGEELTTEEIMAGIKAATIHMHVVPMLPGTAFKNKGVQTLLDAVVHYLPSPVEAPPIKGTKMEDEDVEVVVESTDDGEFASLAFKIMTDPFVGQLTFIRVYRGSLESGSYVLNSTKEKKERVGRIMKMHAIKREEISEIYAGEIGAVVGLKNTTTGDTLCSDKDKVVLERMDFPDPVISVAVEPKTKADQEKMGIALSKLAAEDPSFRVNTDEESGQTIISGMGELHLEILVDRMKREFKVEAEVGAPQVAYRETIRKAVNKEYKYAKQSGGRGQYGHVFLKIEPQEPGFGYEFVDAVKGGVVPKEFIQPVNKGVQEAMARGIQAGYPVEDVKVTLYDGSYHDVDSSEMAFKLAGSMGFRDGCREANPVILEPMMKVEVEVPEEFMGDVIGDVAKRRGQVSGMDDRAGNKIVNAFVPLSEMFGYSTDLRSMTQGRATYAMEFDHYEEVPQNVAKEIIEKRNS.

The region spanning 8-286 (EDVRNIGIAA…AVVHYLPSPV (279 aa)) is the tr-type G domain. Residues 17 to 24 (AHIDAGKT), 81 to 85 (DTPGH), and 135 to 138 (NKMD) contribute to the GTP site.

This sequence belongs to the TRAFAC class translation factor GTPase superfamily. Classic translation factor GTPase family. EF-G/EF-2 subfamily.

The protein localises to the cytoplasm. Its function is as follows. Catalyzes the GTP-dependent ribosomal translocation step during translation elongation. During this step, the ribosome changes from the pre-translocational (PRE) to the post-translocational (POST) state as the newly formed A-site-bound peptidyl-tRNA and P-site-bound deacylated tRNA move to the P and E sites, respectively. Catalyzes the coordinated movement of the two tRNA molecules, the mRNA and conformational changes in the ribosome. The polypeptide is Elongation factor G (Sulfurovum sp. (strain NBC37-1)).